A 153-amino-acid chain; its full sequence is Pheromone-binding protein Gp-9 (153 aa).

The first 19 residues, 1-19, serve as a signal peptide directing secretion; that stretch reads MKTFVLHIFIFALVAFASA. 3 cysteine pairs are disulfide-bonded: Cys37–Cys77, Cys73–Cys129, and Cys118–Cys138.

It belongs to the PBP/GOBP family. As to quaternary structure, homodimer.

It localises to the secreted. Colony queen number, a major feature of social organization, is associated with worker genotype for Gp-9. Colonies are headed by either a single reproductive queen (monogyne form) or multiple queens (polygyne form). Differences in worker Gp-9 genotypes between social forms may cause differences in workers' abilities to recognize queens and regulate their numbers. The polypeptide is Pheromone-binding protein Gp-9 (Solenopsis substituta (Fire ant)).